Consider the following 995-residue polypeptide: Meckelin (995 aa).

Positions 1–36 (MATRGGAGVAMAVWSLLSARAVTAFLLLFLPRFLQA) are cleaved as a signal peptide. The segment at 37–280 (QTFSFPFQQP…FQFIFENTAG (244 aa)) is cysteine-rich. Topologically, residues 37–519 (QTFSFPFQQP…SVTYEMDHGE (483 aa)) are extracellular. 11 disulfides stabilise this stretch: C49–C62, C65–C78, C80–C97, C100–C114, C117–C127, C129–C150, C153–C170, C173–C184, C186–C197, C237–C246, and C253–C268. N-linked (GlcNAc...) asparagine glycosylation occurs at N141. N179 carries an N-linked (GlcNAc...) asparagine glycan. N242 carries an N-linked (GlcNAc...) asparagine glycan. An N-linked (GlcNAc...) asparagine glycan is attached at N318. C357 and C378 are joined by a disulfide. A helical transmembrane segment spans residues 520-548 (AHVQTDIALGVLGGLAVLASLLKTAGWKR). The Cytoplasmic segment spans residues 549-558 (RIGSPMIDLQ). Residues 559–590 (TVVKFLVYYAGDLANVFFIITVGTGLYWLIFF) form a helical membrane-spanning segment. The Extracellular portion of the chain corresponds to 591-603 (KAQKSVSVLLPMP). The helical transmembrane segment at 604 to 631 (IQEERFVTYVGCAFALKALQFLHKLISQ) threads the bilayer. Residues 632-670 (ITIDVFFIDWERPKGKVLKAVEGEGGVRSATVPVSIWRT) lie on the Cytoplasmic side of the membrane. The segment at residues 671 to 679 (YFVANEWNE) is an intramembrane region (helical). The discontinuously helical transmembrane segment at 671-701 (YFVANEWNEIQTVRKINSLFQVLTVLFFLEV) threads the bilayer. Residues 680 to 688 (IQTVRKINS) lie within the membrane without spanning it. An intramembrane region (helical) is located at residues 689 to 701 (LFQVLTVLFFLEV). Residues 702 to 731 (VGFKNLALMDSSSSLSRNPPSYIAPYSCIL) lie on the Extracellular side of the membrane. An intramembrane region (helical) is located at residues 732–757 (RYAVSAALWLAIGIIQVVFFAVFYER). The discontinuously helical transmembrane segment at 732-771 (RYAVSAALWLAIGIIQVVFFAVFYERFIEDKIRQFVDLCS) threads the bilayer. The stretch at 758–762 (FIEDK) is an intramembrane region. Positions 763–771 (IRQFVDLCS) form an intramembrane region, helical. The Cytoplasmic segment spans residues 772 to 926 (MSNISVFLLS…SIFYNDEGYS (155 aa)). Positions 828–917 (GQTFEIAISN…MEFMEPMEKS (90 aa)) form a coiled coil. Positions 927–929 (FSS) form an intramembrane region, helical. A discontinuously helical transmembrane segment spans residues 927-952 (FSSVLYYGNEATLLIFDLLFFCVVDL). The stretch at 930–936 (VLYYGNE) is an intramembrane region. An intramembrane region (helical) is located at residues 937-952 (ATLLIFDLLFFCVVDL). Residues 953–957 (ACQNF) lie on the Extracellular side of the membrane. Residues 958 to 985 (ILASFLTYLQQEIFRYIRNTVGQKNLAS) form a helical membrane-spanning segment. Topologically, residues 986–995 (KTLVDQRFLI) are cytoplasmic.

As to quaternary structure, homodimer. Part of the tectonic-like complex (also named B9 complex). Interacts with DNAJB9, DNAJC10 and mutated SFTPC. Interacts with SYNE2 during the early establishment of cell polarity. Interacts (via C-terminus) with FLNA. Interacts with TMEM218. Interacts with WNT5A. Interacts with ROR2. In terms of tissue distribution, widely expressed in adult and fetal tissues. Expressed at higher level in spinal cord.

The protein resides in the cell membrane. The protein localises to the endoplasmic reticulum membrane. It localises to the cell projection. Its subcellular location is the cilium. It is found in the cytoplasm. The protein resides in the cytoskeleton. The protein localises to the cilium basal body. In terms of biological role, required for ciliary structure and function. Part of the tectonic-like complex which is required for tissue-specific ciliogenesis and may regulate ciliary membrane composition. Involved in centrosome migration to the apical cell surface during early ciliogenesis. Involved in the regulation of cilia length and appropriate number through the control of centrosome duplication. Is a key regulator of stereociliary bundle orientation. Required for epithelial cell branching morphology. Essential for endoplasmic reticulum-associated degradation (ERAD) of surfactant protein C (SFTPC). Involved in the negative regulation of canonical Wnt signaling, and activation of the non-canonical cascade stimulated by WNT5A. In non-canonical Wnt signaling, it may act as ROR2 coreceptor. In Homo sapiens (Human), this protein is Meckelin (TMEM67).